Here is a 279-residue protein sequence, read N- to C-terminus: Complement component 1 Q subcomponent-binding protein, mitochondrial (279 aa).

Residues 1-71 (MLPLLRCVPR…PVPCACGCGA (71 aa)) constitute a mitochondrion transit peptide. Positions 74-91 (TEGDKAFVEFLTDEIKEE) are C1q binding. K89 and K92 each carry N6-acetyllysine. The tract at residues 134–162 (NNSIPPTFDGEEEPSQGQKAEEQEPELTS) is disordered. Positions 166 to 210 (FVVEVTKTDGKKTLVLDCHYPEDEIGHEDEAESDIFSIKEVSFQT) are interaction with MAVS. Y185 is subject to Phosphotyrosine. Phosphoserine is present on residues S198 and S202. Position 211 is a phosphothreonine (T211).

Belongs to the MAM33 family. Homotrimer; three monomers form a donut-shaped structure with an unusually asymmetric charge distribution on the surface. Interacts with CDK13, HRK, VTN, NFYB, ADRA1B, FOXC1, DDX21, DDX50, NCL, SRSF1 and SRSF9. Interacts with CD93; the association may represent a cell surface C1q receptor. Interacts with KRT1; the association represents a cell surface kininogen receptor. Interacts with CD209; the interaction is indicative for a C1q:C1QBP:CD209 signaling complex. Interacts with FBL and RRP1; the respective interactions with C1QBP are competitive. Probably associates with the mitoribosome. Interacts with MAVS; the interaction occurs upon viral transfection. Interacts with PPIF. Interacts with U2AF1L4. Interacts with PLEKHN1. Interacts with VGF-derived peptide TLQP-21. Interacts with MRE11 and RAD50; forming the MRC (MRE11-RAD50-C1QBP) complex that inhibits the activity of MRE11. Ubiquitous.

The protein resides in the mitochondrion matrix. It is found in the nucleus. It localises to the cell membrane. Its subcellular location is the secreted. The protein localises to the cytoplasm. The protein resides in the nucleolus. Its function is as follows. Multifunctional and multicompartmental protein involved in inflammation and infection processes, ribosome biogenesis, protein synthesis in mitochondria, regulation of apoptosis, transcriptional regulation and pre-mRNA splicing. At the cell surface is thought to act as an endothelial receptor for plasma proteins of the complement and kallikrein-kinin cascades. Putative receptor for C1q; specifically binds to the globular 'heads' of C1q thus inhibiting C1; may perform the receptor function through a complex with C1qR/CD93. In complex with cytokeratin-1/KRT1 is a high affinity receptor for kininogen-1/HMWK. Can also bind other plasma proteins, such as coagulation factor XII leading to its autoactivation. May function to bind initially fluid kininogen-1 to the cell membrane. The secreted form may enhance both extrinsic and intrinsic coagulation pathways. It is postulated that the cell surface form requires docking with transmembrane proteins for downstream signaling which might be specific for a cell-type or response. By acting as C1q receptor is involved in chemotaxis of immature dendritic cells and neutrophils and is proposed to signal through CD209/DC-SIGN on immature dendritic cells, through integrin alpha-4/beta-1 during trophoblast invasion of the decidua, and through integrin beta-1 during endothelial cell adhesion and spreading. Signaling involved in inhibition of innate immune response is implicating the PI3K-AKT/PKB pathway. Required for protein synthesis in mitochondria. In mitochondrial translation may be involved in formation of functional 55S mitoribosomes; the function seems to involve its RNA-binding activity. Acts as a RNA modification reader, which specifically recognizes and binds mitochondrial RNAs modified by C5-methylcytosine (m5C) in response to stress, and promotes recruitment of the mitochondrial degradosome complex, leading to their degradation. May be involved in the nucleolar ribosome maturation process; the function may involve the exchange of FBL for RRP1 in the association with pre-ribosome particles. Involved in regulation of RNA splicing by inhibiting the RNA-binding capacity of SRSF1 and its phosphorylation. Is required for the nuclear translocation of splicing factor U2AF1L4. Involved in regulation of CDKN2A- and HRK-mediated apoptosis. Stabilizes mitochondrial CDKN2A isoform smARF. May be involved in regulation of FOXC1 transcriptional activity and NFY/CCAAT-binding factor complex-mediated transcription. May play a role in antibacterial defense as it can bind to cell surface hyaluronan and inhibit Streptococcus pneumoniae hyaluronate lyase. May be involved in modulation of the immune response; ligation by HCV core protein is resulting in suppression of interleukin-12 production in monocyte-derived dendritic cells. Involved in regulation of antiviral response by inhibiting RIGI- and IFIH1-mediated signaling pathways probably involving its association with MAVS after viral infection. Acts as a regulator of DNA repair via homologous recombination by inhibiting the activity of MRE11: interacts with unphosphorylated MRE11 and RAD50 in absence of DNA damage, preventing formation and activity of the MRN complex. Following DNA damage, dissociates from phosphorylated MRE11, allowing formation of the MRN complex. In Rattus norvegicus (Rat), this protein is Complement component 1 Q subcomponent-binding protein, mitochondrial (C1qbp).